A 198-amino-acid polypeptide reads, in one-letter code: GTP-binding protein RHO1 (198 aa).

16–23 (GDGACGKT) provides a ligand contact to GTP. The Effector region signature appears at 38-46 (YVPTVFENY). Residues 63–67 (DTAGQ) and 121–124 (CKSD) contribute to the GTP site. C195 carries the post-translational modification Cysteine methyl ester. Residue C195 is the site of S-geranylgeranyl cysteine attachment. The propeptide at 196-198 (VVL) is removed in mature form.

The protein belongs to the small GTPase superfamily. Rho family.

It localises to the cell membrane. The protein is GTP-binding protein RHO1 (RHO1) of Candida albicans (strain SC5314 / ATCC MYA-2876) (Yeast).